Here is a 416-residue protein sequence, read N- to C-terminus: Phosphoribosylamine--glycine ligase (416 aa).

An ATP-grasp domain is found at 107-313 (KDFMKKYNVK…FVDLINAAMD (207 aa)). An ATP-binding site is contributed by 133-194 (LKKCTYPIVI…EEYLEGVEAS (62 aa)). The Mg(2+) site is built by Glu283 and Asn285.

The protein belongs to the GARS family. Requires Mg(2+) as cofactor. The cofactor is Mn(2+).

The catalysed reaction is 5-phospho-beta-D-ribosylamine + glycine + ATP = N(1)-(5-phospho-beta-D-ribosyl)glycinamide + ADP + phosphate + H(+). The protein operates within purine metabolism; IMP biosynthesis via de novo pathway; N(1)-(5-phospho-D-ribosyl)glycinamide from 5-phospho-alpha-D-ribose 1-diphosphate: step 2/2. The chain is Phosphoribosylamine--glycine ligase from Clostridium acetobutylicum (strain ATCC 824 / DSM 792 / JCM 1419 / IAM 19013 / LMG 5710 / NBRC 13948 / NRRL B-527 / VKM B-1787 / 2291 / W).